The primary structure comprises 472 residues: Aspartyl/glutamyl-tRNA(Asn/Gln) amidotransferase subunit B (472 aa).

The protein belongs to the GatB/GatE family. GatB subfamily. As to quaternary structure, heterotrimer of A, B and C subunits.

It carries out the reaction L-glutamyl-tRNA(Gln) + L-glutamine + ATP + H2O = L-glutaminyl-tRNA(Gln) + L-glutamate + ADP + phosphate + H(+). It catalyses the reaction L-aspartyl-tRNA(Asn) + L-glutamine + ATP + H2O = L-asparaginyl-tRNA(Asn) + L-glutamate + ADP + phosphate + 2 H(+). Allows the formation of correctly charged Asn-tRNA(Asn) or Gln-tRNA(Gln) through the transamidation of misacylated Asp-tRNA(Asn) or Glu-tRNA(Gln) in organisms which lack either or both of asparaginyl-tRNA or glutaminyl-tRNA synthetases. The reaction takes place in the presence of glutamine and ATP through an activated phospho-Asp-tRNA(Asn) or phospho-Glu-tRNA(Gln). The chain is Aspartyl/glutamyl-tRNA(Asn/Gln) amidotransferase subunit B from Elusimicrobium minutum (strain Pei191).